Consider the following 366-residue polypeptide: tRNA/tmRNA (uracil-C(5))-methyltransferase (366 aa).

S-adenosyl-L-methionine-binding residues include Q189, Y217, N222, E238, and D298. Residue C323 is the Nucleophile of the active site. The active-site Proton acceptor is the E357.

The protein belongs to the class I-like SAM-binding methyltransferase superfamily. RNA M5U methyltransferase family. TrmA subfamily.

The catalysed reaction is uridine(54) in tRNA + S-adenosyl-L-methionine = 5-methyluridine(54) in tRNA + S-adenosyl-L-homocysteine + H(+). It catalyses the reaction uridine(341) in tmRNA + S-adenosyl-L-methionine = 5-methyluridine(341) in tmRNA + S-adenosyl-L-homocysteine + H(+). Its function is as follows. Dual-specificity methyltransferase that catalyzes the formation of 5-methyluridine at position 54 (m5U54) in all tRNAs, and that of position 341 (m5U341) in tmRNA (transfer-mRNA). This chain is tRNA/tmRNA (uracil-C(5))-methyltransferase, found in Shewanella oneidensis (strain ATCC 700550 / JCM 31522 / CIP 106686 / LMG 19005 / NCIMB 14063 / MR-1).